Reading from the N-terminus, the 147-residue chain is Hemoglobin subunit epsilon (147 aa).

The region spanning 3-147 is the Globin domain; it reads HFTAEEKAAV…VAIALAHKYH (145 aa). Phosphoserine is present on residues S14 and S51. H64 and H93 together coordinate heme b.

The protein belongs to the globin family. Heterotetramer of two alpha chains and two epsilon chains in early embryonic hemoglobin Gower-2; two zeta chains and two epsilon chains in early embryonic hemoglobin Gower-1. Red blood cells.

Functionally, the epsilon chain is a beta-type chain of early mammalian embryonic hemoglobin. The protein is Hemoglobin subunit epsilon (HBE1) of Pan paniscus (Pygmy chimpanzee).